We begin with the raw amino-acid sequence, 455 residues long: MKLLVVGASYRTAPVAALERLAVAPADLPHALARLVAQPYVSEAVLVSTCNRVEVYAAVSGFHGGLGDICAVLAESTGVPPAALADHLYVHFDAAAVKHAFRVATGLDSMVVGEAQILGQLRDAYHWASGADTTGRLLHELMQQALRVGKRAHSETGIDRAGQSVVTAALGLATELLNSDLAARPALVVGAGAMGSLGVATLSRLGAGPVAVTNRGADRAVRLAESYGATAVPIADLTATLSTVDIVVAATAAPEAVLTREVVTRALADRKPSRGPLVLLDLAVPRDVEPGVADLPGVQVIDIDRMAALVANGPAAADAAAVERIVATEVDAFLNWLRGADVAPTVAALRGRADNVVTVELGRLAQRRPDLTDDQRDEVARTVHRVVQRLLHQPTVRVRQLAAEPGGDQYAALLRELFDLEVPQTSPVGTVPEVVVPEAVPPLGGAAEDPSTGGQ.

Residues Thr-49–Arg-52, Ser-109, Glu-114–Gln-116, and Gln-120 each bind substrate. The active-site Nucleophile is the Cys-50. Residue Gly-190 to Gly-195 participates in NADP(+) binding.

It belongs to the glutamyl-tRNA reductase family. Homodimer.

The catalysed reaction is (S)-4-amino-5-oxopentanoate + tRNA(Glu) + NADP(+) = L-glutamyl-tRNA(Glu) + NADPH + H(+). It participates in porphyrin-containing compound metabolism; protoporphyrin-IX biosynthesis; 5-aminolevulinate from L-glutamyl-tRNA(Glu): step 1/2. Its function is as follows. Catalyzes the NADPH-dependent reduction of glutamyl-tRNA(Glu) to glutamate 1-semialdehyde (GSA). The protein is Glutamyl-tRNA reductase of Salinispora arenicola (strain CNS-205).